A 476-amino-acid polypeptide reads, in one-letter code: Acidic leucine-rich nuclear phosphoprotein 32-related protein 1 (476 aa).

3 LRR repeats span residues 51 to 72 (SLEH…PRLR), 73 to 92 (NLTR…DHLV), and 98 to 119 (SLRD…SPLA). Residues 131 to 169 (CPVTRVKDYRSKVFGMIRTLKYLDKMDADENERPESDDD) enclose the LRRCT domain. The disordered stretch occupies residues 157-476 (DADENERPES…VEDLRPFKHH (320 aa)). Composition is skewed to acidic residues over residues 165–194 (ESDD…EDPG), 222–232 (DVDEDESDADE), 252–289 (GDED…EDAV), 299–329 (SDEE…EAEP), 353–371 (EGED…EERL), 379–396 (EGND…EDTE), 415–436 (DAAE…DDGG), and 458–467 (GDDDEDDDGV).

The protein belongs to the ANP32 family.

This Oryza sativa subsp. japonica (Rice) protein is Acidic leucine-rich nuclear phosphoprotein 32-related protein 1.